Reading from the N-terminus, the 72-residue chain is MAIKRGTLVRAIREKLQGSLEAQASDPLIPNYVFETPGEVVDIKDDYLQIKFGAVPTPPIWLRADQVEEIAS.

It belongs to the complex I NdhO subunit family. NDH-1 can be composed of about 15 different subunits; different subcomplexes with different compositions have been identified which probably have different functions.

The protein resides in the cellular thylakoid membrane. The enzyme catalyses a plastoquinone + NADH + (n+1) H(+)(in) = a plastoquinol + NAD(+) + n H(+)(out). It carries out the reaction a plastoquinone + NADPH + (n+1) H(+)(in) = a plastoquinol + NADP(+) + n H(+)(out). In terms of biological role, NDH-1 shuttles electrons from an unknown electron donor, via FMN and iron-sulfur (Fe-S) centers, to quinones in the respiratory and/or the photosynthetic chain. The immediate electron acceptor for the enzyme in this species is believed to be plastoquinone. Couples the redox reaction to proton translocation, and thus conserves the redox energy in a proton gradient. Cyanobacterial NDH-1 also plays a role in inorganic carbon-concentration. The polypeptide is NAD(P)H-quinone oxidoreductase subunit O (Synechococcus sp. (strain JA-3-3Ab) (Cyanobacteria bacterium Yellowstone A-Prime)).